The chain runs to 315 residues: Putative glycosyltransferase ORF315 (315 aa).

This sequence belongs to the glycosyltransferase group 1 family. Glycosyltransferase 4 subfamily.

The protein is Putative glycosyltransferase ORF315 of Acidianus convivator (ABV).